A 189-amino-acid chain; its full sequence is B3 domain-containing protein At2g32645 (189 aa).

The segment at residues Phe-33–Ile-133 is a DNA-binding region (TF-B3).

It is found in the nucleus. The sequence is that of B3 domain-containing protein At2g32645 from Arabidopsis thaliana (Mouse-ear cress).